Reading from the N-terminus, the 89-residue chain is SAP domain-containing new25 (89 aa).

Positions Pro44–Leu78 constitute an SAP domain.

This is SAP domain-containing new25 (new25) from Schizosaccharomyces pombe (strain 972 / ATCC 24843) (Fission yeast).